The primary structure comprises 250 residues: Pyrroloquinoline-quinone synthase (250 aa).

This sequence belongs to the PqqC family.

The catalysed reaction is 6-(2-amino-2-carboxyethyl)-7,8-dioxo-1,2,3,4,7,8-hexahydroquinoline-2,4-dicarboxylate + 3 O2 = pyrroloquinoline quinone + 2 H2O2 + 2 H2O + H(+). Its pathway is cofactor biosynthesis; pyrroloquinoline quinone biosynthesis. In terms of biological role, ring cyclization and eight-electron oxidation of 3a-(2-amino-2-carboxyethyl)-4,5-dioxo-4,5,6,7,8,9-hexahydroquinoline-7,9-dicarboxylic-acid to PQQ. The polypeptide is Pyrroloquinoline-quinone synthase (Xanthomonas axonopodis pv. citri (strain 306)).